Reading from the N-terminus, the 243-residue chain is 3-deoxy-manno-octulosonate cytidylyltransferase (243 aa).

The protein belongs to the KdsB family.

It is found in the cytoplasm. The enzyme catalyses 3-deoxy-alpha-D-manno-oct-2-ulosonate + CTP = CMP-3-deoxy-beta-D-manno-octulosonate + diphosphate. Its pathway is nucleotide-sugar biosynthesis; CMP-3-deoxy-D-manno-octulosonate biosynthesis; CMP-3-deoxy-D-manno-octulosonate from 3-deoxy-D-manno-octulosonate and CTP: step 1/1. It participates in bacterial outer membrane biogenesis; lipopolysaccharide biosynthesis. Its function is as follows. Activates KDO (a required 8-carbon sugar) for incorporation into bacterial lipopolysaccharide in Gram-negative bacteria. The protein is 3-deoxy-manno-octulosonate cytidylyltransferase of Bartonella henselae (strain ATCC 49882 / DSM 28221 / CCUG 30454 / Houston 1) (Rochalimaea henselae).